A 370-amino-acid chain; its full sequence is DNA replication and repair protein RecF (370 aa).

30–37 (GDNGSGKT) is a binding site for ATP.

Belongs to the RecF family.

Its subcellular location is the cytoplasm. Functionally, the RecF protein is involved in DNA metabolism; it is required for DNA replication and normal SOS inducibility. RecF binds preferentially to single-stranded, linear DNA. It also seems to bind ATP. This is DNA replication and repair protein RecF from Stutzerimonas stutzeri (strain A1501) (Pseudomonas stutzeri).